A 75-amino-acid chain; its full sequence is ATP synthase subunit c (75 aa).

2 helical membrane-spanning segments follow: residues 12 to 32 (LASI…GIVV) and 49 to 69 (LTVL…IGIG).

It belongs to the ATPase C chain family. F-type ATPases have 2 components, F(1) - the catalytic core - and F(0) - the membrane proton channel. F(1) has five subunits: alpha(3), beta(3), gamma(1), delta(1), epsilon(1). F(0) has three main subunits: a(1), b(2) and c(10-14). The alpha and beta chains form an alternating ring which encloses part of the gamma chain. F(1) is attached to F(0) by a central stalk formed by the gamma and epsilon chains, while a peripheral stalk is formed by the delta and b chains.

Its subcellular location is the cell membrane. F(1)F(0) ATP synthase produces ATP from ADP in the presence of a proton or sodium gradient. F-type ATPases consist of two structural domains, F(1) containing the extramembraneous catalytic core and F(0) containing the membrane proton channel, linked together by a central stalk and a peripheral stalk. During catalysis, ATP synthesis in the catalytic domain of F(1) is coupled via a rotary mechanism of the central stalk subunits to proton translocation. Its function is as follows. Key component of the F(0) channel; it plays a direct role in translocation across the membrane. A homomeric c-ring of between 10-14 subunits forms the central stalk rotor element with the F(1) delta and epsilon subunits. This is ATP synthase subunit c from Tropheryma whipplei (strain TW08/27) (Whipple's bacillus).